Consider the following 372-residue polypeptide: Histidinol-phosphate aminotransferase (372 aa).

At lysine 234 the chain carries N6-(pyridoxal phosphate)lysine.

This sequence belongs to the class-II pyridoxal-phosphate-dependent aminotransferase family. Histidinol-phosphate aminotransferase subfamily. As to quaternary structure, homodimer. Pyridoxal 5'-phosphate serves as cofactor.

The enzyme catalyses L-histidinol phosphate + 2-oxoglutarate = 3-(imidazol-4-yl)-2-oxopropyl phosphate + L-glutamate. The protein operates within amino-acid biosynthesis; L-histidine biosynthesis; L-histidine from 5-phospho-alpha-D-ribose 1-diphosphate: step 7/9. The polypeptide is Histidinol-phosphate aminotransferase (hisC) (Corynebacterium efficiens (strain DSM 44549 / YS-314 / AJ 12310 / JCM 11189 / NBRC 100395)).